The sequence spans 307 residues: Myeloid-associated differentiation marker-like protein 2 (307 aa).

MARVEL domains follow at residues 17–154 (AVTS…ARPG) and 159–303 (YMAT…RIRF). Transmembrane regions (helical) follow at residues 53-73 (FCMA…ACEF), 90-110 (AFAM…PLYF), 129-149 (LAAS…VALT), 163-183 (VSGL…GALV), 198-218 (VAVY…SVMG), 232-252 (VVYT…WPVF), and 278-298 (LVVA…LAYS).

It belongs to the MAL family.

Its subcellular location is the membrane. The polypeptide is Myeloid-associated differentiation marker-like protein 2 (Myadml2) (Rattus norvegicus (Rat)).